Reading from the N-terminus, the 988-residue chain is Exportin-T (988 aa).

Belongs to the exportin family. As to expression, expressed in young leaves, growing leaf blades, young floral organs and root tips.

It localises to the nucleus. Its subcellular location is the cytoplasm. Probable tRNA nucleus export receptor which regulates tRNA processing and facilitates tRNA translocation across the nuclear pore complex. Is required for proper activity of the shoot apical meristem (SAM) and correct leaf initiation at different developmental stages, and may play a role in floral patterning. This is Exportin-T (PSD) from Arabidopsis thaliana (Mouse-ear cress).